The following is a 607-amino-acid chain: Chaperone protein DnaK (607 aa).

Thr-173 is modified (phosphothreonine; by autocatalysis). Residues 577–588 (AQAQQGAEGAAS) are compositionally biased toward low complexity. The interval 577–607 (AQAQQGAEGAASQDDDVVDADFTEVKDDDNK) is disordered. Residues 589 to 598 (QDDDVVDADF) are compositionally biased toward acidic residues.

Belongs to the heat shock protein 70 family.

In terms of biological role, acts as a chaperone. In Macrococcus caseolyticus (strain JCSC5402) (Macrococcoides caseolyticum), this protein is Chaperone protein DnaK.